Here is a 317-residue protein sequence, read N- to C-terminus: Retinol dehydrogenase 16 (317 aa).

33–57 contacts NAD(+); that stretch reads FITGCDSGFGKLLARQLDARGLRVL. Residue S164 participates in substrate binding. Catalysis depends on Y176, which acts as the Proton acceptor. The chain crosses the membrane as a helical span at residues 289–309; sequence LLYLPMSYMPTFLVDAIMYWV.

Belongs to the short-chain dehydrogenases/reductases (SDR) family. In terms of assembly, homodimer. Not N-glycosylated. As to expression, highly expressed in adult liver (at protein level). Detected in endometrium, liver and foreskin. Detected in the spineous layers of adult skin, and at lower levels in basal and granular skin layers. Detected in fetal liver and lung.

The protein localises to the microsome membrane. Its subcellular location is the endoplasmic reticulum membrane. It catalyses the reaction all-trans-retinol--[retinol-binding protein] + NAD(+) = all-trans-retinal--[retinol-binding protein] + NADH + H(+). The enzyme catalyses all-trans-retinol + NAD(+) = all-trans-retinal + NADH + H(+). It carries out the reaction 13-cis-retinol + NAD(+) = 13-cis-retinal + NADH + H(+). The catalysed reaction is 11-cis-retinol + NAD(+) = 11-cis-retinal + NADH + H(+). It catalyses the reaction 9-cis-retinol + NAD(+) = 9-cis-retinal + NADH + H(+). The enzyme catalyses 5alpha-androstane-3alpha,17beta-diol + NAD(+) = 17beta-hydroxy-5alpha-androstan-3-one + NADH + H(+). It carries out the reaction androsterone + NAD(+) = 5alpha-androstan-3,17-dione + NADH + H(+). It participates in cofactor metabolism; retinol metabolism. With respect to regulation, inhibited by citral, perillyl alcohol, geraniol, farnesol and geranyl geraniol. Its function is as follows. Oxidoreductase with a preference for NAD. Oxidizes all-trans-retinol, 9-cis-retinol, 11-cis-retinol and 13-cis-retinol to the corresponding aldehydes. Has higher activity towards CRBP-bound retinol than with free retinol. Also oxidizes 3-alpha-hydroxysteroids. Oxidizes androstanediol and androsterone to dihydrotestosterone and androstanedione. Can also catalyze the reverse reaction. This is Retinol dehydrogenase 16 from Homo sapiens (Human).